Reading from the N-terminus, the 113-residue chain is Large ribosomal subunit protein uL22 (113 aa).

Belongs to the universal ribosomal protein uL22 family. Part of the 50S ribosomal subunit.

This protein binds specifically to 23S rRNA; its binding is stimulated by other ribosomal proteins, e.g. L4, L17, and L20. It is important during the early stages of 50S assembly. It makes multiple contacts with different domains of the 23S rRNA in the assembled 50S subunit and ribosome. Functionally, the globular domain of the protein is located near the polypeptide exit tunnel on the outside of the subunit, while an extended beta-hairpin is found that lines the wall of the exit tunnel in the center of the 70S ribosome. The protein is Large ribosomal subunit protein uL22 of Desulforamulus reducens (strain ATCC BAA-1160 / DSM 100696 / MI-1) (Desulfotomaculum reducens).